A 546-amino-acid polypeptide reads, in one-letter code: Chaperonin GroEL 2 (546 aa).

ATP contacts are provided by residues 30–33, lysine 51, 87–91, glycine 415, 479–481, and aspartate 495; these read TLGP, DGTTT, and NAA. A disordered region spans residues 524 to 546; it reads APKDAPPAAPAGVPGAGGPGFDF. Positions 537–546 are enriched in gly residues; sequence PGAGGPGFDF.

It belongs to the chaperonin (HSP60) family. In terms of assembly, forms a cylinder of 14 subunits composed of two heptameric rings stacked back-to-back. Interacts with the co-chaperonin GroES.

It is found in the cytoplasm. The enzyme catalyses ATP + H2O + a folded polypeptide = ADP + phosphate + an unfolded polypeptide.. Together with its co-chaperonin GroES, plays an essential role in assisting protein folding. The GroEL-GroES system forms a nano-cage that allows encapsulation of the non-native substrate proteins and provides a physical environment optimized to promote and accelerate protein folding. The polypeptide is Chaperonin GroEL 2 (Burkholderia pseudomallei (strain 1710b)).